Consider the following 161-residue polypeptide: MAEDKPVVESFQLDHTKVKAPYVRYIDTETGLHGDVISNYDLRLVQPNENAIPTGGLHTIEHTIAVLLRERIPGYIDCSPFGCRTGFHLLTWGEHSTEDVARALKESLEFIAYEATWDDVPATTIESCGNYRDHSLFTAKEWCKDILAKGISSDPFERRLV.

Residues His58, His62, and Cys128 each contribute to the Fe cation site.

It belongs to the LuxS family. Homodimer. Fe cation is required as a cofactor.

The catalysed reaction is S-(5-deoxy-D-ribos-5-yl)-L-homocysteine = (S)-4,5-dihydroxypentane-2,3-dione + L-homocysteine. Involved in the synthesis of autoinducer 2 (AI-2) which is secreted by bacteria and is used to communicate both the cell density and the metabolic potential of the environment. The regulation of gene expression in response to changes in cell density is called quorum sensing. Catalyzes the transformation of S-ribosylhomocysteine (RHC) to homocysteine (HC) and 4,5-dihydroxy-2,3-pentadione (DPD). This is S-ribosylhomocysteine lyase from Bifidobacterium adolescentis (strain ATCC 15703 / DSM 20083 / NCTC 11814 / E194a).